The following is a 112-amino-acid chain: MAALVREVVGDVLRGARMSQGRTLREVSDSARVSLGYLSEIERGRKEPSSELLSAICTALQLPLSVVLIDAGERMARQERLARATPAGRATGATIDASTKVVIAPVVSLAVA.

Residues Leu13–Val67 form the HTH cro/C1-type domain. The segment at residues Leu24–Arg43 is a DNA-binding region (H-T-H motif).

Its function is as follows. Key stress-response regulator that plays an important role in multiple regulatory networks in response to different stress conditions. Required to manage host-derived stress during infection. Plays a role during hypoxia and reaeration. Controls the expression of many genes involved in heat shock, virulence, lipid metabolism, transport or regulation, including clpP1, clpP2, clpC1, hsp, groES, otsA, pknD, prcA and prcB. May function by protecting intracellular redox potential and by inducing the expression of trehalose, a constituent of cell walls that is important for defense against cell-surface and oxidative stress. Also performs different functions during stress response and is important for the pathogenicity of M.tuberculosis in vivo, regardless of the induction of the Clp proteolytic pathway. May directly activate SigE and/or SigH. The polypeptide is Transcriptional regulator ClgR (clgR) (Mycobacterium tuberculosis (strain CDC 1551 / Oshkosh)).